A 195-amino-acid polypeptide reads, in one-letter code: COMM domain-containing protein 3 (195 aa).

One can recognise a COMM domain in the interval 124-193; sequence HITDVSWRLE…DASKSLERAT (70 aa).

The protein belongs to the COMM domain-containing protein 3 family. As to quaternary structure, component of the commander complex consisting of the CCC subcomplex and the retriever subcomplex. Component of the CCC (COMMD/CCDC22/CCDC93) subcomplex consisting of COMMD1, COMMD2, COMMD3, COMMD4, COMMD5, COMMD6, COMMD7, COMMD8, COMMD9, COMMD10, CCDC22 and CCDC93; within the complex forms a heterodimer with COMMD2. Interacts with NFKB1/p105. Interacts with CCDC22, CCDC93, SCNN1B, CUL3, CUL4A, CUL4B, CUL5. Expressed in kidney collecting duct cells and in the nuclei of proximal convoluted tubule cells in the kidney cortex (at protein level).

The protein localises to the cytoplasm. Its subcellular location is the nucleus. Its function is as follows. Scaffold protein in the commander complex that is essential for endosomal recycling of transmembrane cargos; the commander complex is composed of the CCC subcomplex and the retriever subcomplex. May modulate activity of cullin-RING E3 ubiquitin ligase (CRL) complexes. May down-regulate activation of NF-kappa-B. Modulates Na(+) transport in epithelial cells by regulation of apical cell surface expression of amiloride-sensitive sodium channel (ENaC) subunits. This is COMM domain-containing protein 3 (Commd3) from Rattus norvegicus (Rat).